A 603-amino-acid polypeptide reads, in one-letter code: 65-kDa microtubule-associated protein 7 (603 aa).

Coiled coils occupy residues 48-79 (KECLEIYRRKVDEAANSKAQLHQSLVSIEAEI), 131-186 (DIKA…EKSD), and 468-502 (RLVSILEDYKLTRKQQEEEKRRYRDQKKMQDLLIK). Residues 501–559 (IKRRESIYGSKPSPRRSNSVRKTNGYNGDASVPPTPRRNSAGATNNDIMTTPRSYSSHR) form a disordered region. Serine 513 is modified (phosphoserine). Polar residues-rich tracts occupy residues 515-526 (RRSNSVRKTNGY) and 537-559 (RRNSAGATNNDIMTTPRSYSSHR). A Phosphoserine modification is found at serine 599.

It belongs to the MAP65/ASE1 family. In terms of assembly, forms dimer. Binds to microtubules (MT).

It is found in the nucleus. The protein localises to the cytoplasm. The protein resides in the cytoskeleton. It localises to the spindle pole. In Arabidopsis thaliana (Mouse-ear cress), this protein is 65-kDa microtubule-associated protein 7 (MAP65-7).